A 261-amino-acid polypeptide reads, in one-letter code: uncharacterized protein (261 aa).

41 to 48 (GKSGSGKS) provides a ligand contact to ATP.

The protein belongs to the IIV-6 075L family.

This is an uncharacterized protein from Invertebrate iridescent virus 3 (IIV-3).